The primary structure comprises 95 residues: uncharacterized protein (95 aa).

Residues 45 to 65 traverse the membrane as a helical segment; sequence WLSGLAFVLQAALVMPVVLAF.

The protein resides in the membrane. This is an uncharacterized protein from Mycobacterium leprae (strain TN).